We begin with the raw amino-acid sequence, 1045 residues long: Putative sodium-coupled neutral amino acid transporter 10 (1045 aa).

10 consecutive transmembrane segments (helical) span residues 8–28, 33–53, 85–105, 117–137, 150–170, 226–246, 269–289, 320–340, 342–362, and 375–395; these read LIMN…PFCF, ILLG…SCMF, SMIG…GDLG, VSEG…VLPL, FSAM…LSSF, IFAL…FFGY, MIRV…ILPC, ILTL…PNVE, ILGL…PALI, and FILG…LTVT. Composition is skewed to basic and acidic residues over residues 412–453, 460–479, and 503–546; these read KEEK…EEQI, PQKE…RPDQ, and VDEK…DQAE. Disordered stretches follow at residues 412–584 and 606–658; these read KEEK…EQPP and EIAE…AEAG. Residues 564-573 are compositionally biased toward polar residues; sequence NDPNKQQLVN. Residues 627–658 show a composition bias toward basic and acidic residues; sequence PIKDEKNEQIPGDPGKESHVEPKAEDNQAEAG.

Belongs to the amino acid/polyamine transporter 2 family.

It is found in the membrane. In terms of biological role, putative sodium-dependent amino acid/proton antiporter. This Xenopus laevis (African clawed frog) protein is Putative sodium-coupled neutral amino acid transporter 10 (slc38a10).